The chain runs to 1166 residues: Reverse gyrase (1166 aa).

The segment at 1–40 adopts an RG N-terminal-type zinc-finger fold; the sequence is MINVMYKNSCPNCGGDISADRLLNGLPCETCLPYINGIDG. Residues Cys10, Cys13, Cys28, and Cys31 each coordinate Zn(2+). ATP is bound by residues Gln92 and 109 to 116; that span reads APTGLGKT. Residues 96–285 form the Helicase ATP-binding domain; it reads LRRLVSNQSF…ALRLLTGFEP (190 aa). Positions 190 to 193 match the DEAD box motif; it reads DDAD. The tract at residues 576 to 1166 is topoisomerase I; sequence FNISTGLLIV…VNPLKSEQNV (591 aa). One can recognise a Toprim domain in the interval 580-743; the sequence is TGLLIVESPT…NIYRITYHEI (164 aa). Mg(2+) is bound at residue Glu586. Residues 662–689 form an RG C-terminal-type zinc finger; that stretch reads IKKCLDCNKTFSIASDKCPYCGSTNVQT. Zn(2+)-binding residues include Cys665, Cys668, Cys679, and Cys682. Asp712 contacts Mg(2+). Positions 759–1157 constitute a Topo IA-type catalytic domain; it reads NTNLVMSQIV…EIFSEISTLV (399 aa). Tyr903 (O-(5'-phospho-DNA)-tyrosine intermediate) is an active-site residue.

The protein in the N-terminal section; belongs to the DEAD box helicase family. DDVD subfamily. It in the C-terminal section; belongs to the type IA topoisomerase family. As to quaternary structure, monomer. Requires Zn(2+) as cofactor. It depends on Mg(2+) as a cofactor.

It localises to the cytoplasm. It carries out the reaction ATP + H2O = ADP + phosphate + H(+). Inhibited by UV light-induced lesions; substrate is completely cleaved but a nicked form accumulates, suggesting the reaction is blocked between the cleavage and ligation steps. Inhibited by actinomycin D; substrate DNA remains negatively supercoiled in this case. Activity is stimulated by SSB from S.solfataricus strain P2. Positive supercoiling is inhibited by Sul7d (also called Sso7d) from S.solfataricus strain MT4; SSB from S.solfataricus strain P2 relieves this inhibition. Its function is as follows. Modifies the topological state of DNA by introducing positive supercoils in an ATP-dependent process. Increases the linking number in steps of +1. In vitro requires high concentrations to supercoil negatively supercoiled DNA, relaxes plasmid DNA first; DNA single-strand binding protein (SSB) from S.solfataricus strain P2 stimulates positive supercoiling. SSB stimulates DNA-binding by reverse gyrase, and thus all subsequent steps. Binds to single-stranded DNA, transiently cleaves and then rejoins the ends, introducing a positive supercoil in the process. The scissile phosphodiester is attacked by the catalytic tyrosine of the enzyme, resulting in the formation of a DNA-(5'-phosphotyrosyl)-enzyme intermediate. May be involved in DNA damage response. Probably involved in rewinding DNA strands in regions of the chromosome that have opened up to allow replication, transcription, DNA repair and/or for DNA protection. In Saccharolobus shibatae (strain ATCC 51178 / DSM 5389 / JCM 8931 / NBRC 15437 / B12) (Sulfolobus shibatae), this protein is Reverse gyrase.